We begin with the raw amino-acid sequence, 72 residues long: Late effector protein 1 (72 aa).

Positions 1-22 (MKCYLVVVVAALCTLVAQGSVG) are cleaved as a signal peptide. N-linked (GlcNAc...) asparagine glycosylation occurs at asparagine 66.

The protein belongs to the lep1 family. Interacts at the cell wall with secreted rep1 repellent peptides.

It localises to the secreted. The protein resides in the cell wall. Its function is as follows. Core effector contributing to spore formation and tumor formation at the host plant. Modulates surface hydrophobicity promoting cell-cell or cell-surface contacts. Lep1 and rep1 interact in aerial hyphae to form a strong hydrophobic layer. Plays a crucial role in hyphal aggregation that might be a prerequisite for strong proliferation of diploid cells and for induction of the morphological changes associated with spore formation. This Sporisorium reilianum (strain SRZ2) (Maize head smut fungus) protein is Late effector protein 1.